The following is a 328-amino-acid chain: Biotin synthase (328 aa).

One can recognise a Radical SAM core domain in the interval 53–282 (FHGNRVDLCA…ATTIRYAGGR (230 aa)). C71, C75, and C78 together coordinate [4Fe-4S] cluster. [2Fe-2S] cluster contacts are provided by S115, C147, C207, and R277.

This sequence belongs to the radical SAM superfamily. Biotin synthase family. Homodimer. The cofactor is [4Fe-4S] cluster. [2Fe-2S] cluster is required as a cofactor.

The catalysed reaction is (4R,5S)-dethiobiotin + (sulfur carrier)-SH + 2 reduced [2Fe-2S]-[ferredoxin] + 2 S-adenosyl-L-methionine = (sulfur carrier)-H + biotin + 2 5'-deoxyadenosine + 2 L-methionine + 2 oxidized [2Fe-2S]-[ferredoxin]. It participates in cofactor biosynthesis; biotin biosynthesis; biotin from 7,8-diaminononanoate: step 2/2. In terms of biological role, catalyzes the conversion of dethiobiotin (DTB) to biotin by the insertion of a sulfur atom into dethiobiotin via a radical-based mechanism. The polypeptide is Biotin synthase (Desulforudis audaxviator (strain MP104C)).